A 367-amino-acid chain; its full sequence is MISSLHRPTLAKVDLSAISENIEQVVSHIPKQVQTFAVVKANAYGHGAVEVAKHVSKQVDGFCVSNLDEALELRQAGIEQPILILGVVLPDGVPLAIQENISLTVASLEWLTLAQKQGLDLTGLTCHIKVDSGMGRIGVRNLKDADNLIAGLKALGADVEGIFTHFATADEADDSKFKRQLSFFTDLVDNLTDRPRLVHASNSATSIWHAATVFNTVRLGVVIYGLNPSGSVLELPYNIQPALSLETALIHVKTLPAGQDVGYGATYTTTDEEVIGTLPIGYADGWTRDLQGFHVIVDGQLCPIVGRVSMDQITVRLPKVYPLGTPVTLMGENGGVSITATEVAEKRGTINYEVLCLLSDRVPRSYD.

The Proton acceptor; specific for D-alanine role is filled by lysine 40. N6-(pyridoxal phosphate)lysine is present on lysine 40. Arginine 136 is a binding site for substrate. Residue tyrosine 263 is the Proton acceptor; specific for L-alanine of the active site. Methionine 310 contacts substrate.

Belongs to the alanine racemase family. Requires pyridoxal 5'-phosphate as cofactor.

The catalysed reaction is L-alanine = D-alanine. It participates in amino-acid biosynthesis; D-alanine biosynthesis; D-alanine from L-alanine: step 1/1. Its function is as follows. Catalyzes the interconversion of L-alanine and D-alanine. May also act on other amino acids. This chain is Alanine racemase (alr), found in Streptococcus thermophilus (strain ATCC BAA-250 / LMG 18311).